We begin with the raw amino-acid sequence, 330 residues long: Copper-containing nitrite reductase (330 aa).

Plastocyanin-like domains follow at residues 1–165 (GLPR…YDRV) and 166–330 (YTIG…PGPA). The Cu cation site is built by H85, H90, H125, C126, H135, M140, and H296.

This sequence belongs to the multicopper oxidase family. In terms of assembly, homotrimer. Cu(2+) serves as cofactor. Cu(+) is required as a cofactor. It depends on FAD as a cofactor.

The protein resides in the periplasm. The catalysed reaction is nitric oxide + Fe(III)-[cytochrome c] + H2O = Fe(II)-[cytochrome c] + nitrite + 2 H(+). It functions in the pathway nitrogen metabolism; nitrate reduction (denitrification); dinitrogen from nitrate: step 2/4. The sequence is that of Copper-containing nitrite reductase (nirK) from Alcaligenes xylosoxydans xylosoxydans (Achromobacter xylosoxidans).